The chain runs to 401 residues: S-adenosylmethionine synthase (401 aa).

Residue His-16 participates in ATP binding. Residue Asp-18 coordinates Mg(2+). K(+) is bound at residue Glu-44. Residues Glu-57 and Gln-100 each coordinate L-methionine. The interval 100-110 is flexible loop; sequence QSPDIAQGVNE. Residues 174–176, 241–242, Asp-250, 256–257, Ala-273, and Lys-277 contribute to the ATP site; these read DAK, RF, and RK. Asp-250 contacts L-methionine. L-methionine is bound at residue Lys-281.

Belongs to the AdoMet synthase family. As to quaternary structure, homotetramer; dimer of dimers. Mg(2+) serves as cofactor. Requires K(+) as cofactor.

Its subcellular location is the cytoplasm. It catalyses the reaction L-methionine + ATP + H2O = S-adenosyl-L-methionine + phosphate + diphosphate. Its pathway is amino-acid biosynthesis; S-adenosyl-L-methionine biosynthesis; S-adenosyl-L-methionine from L-methionine: step 1/1. Its function is as follows. Catalyzes the formation of S-adenosylmethionine (AdoMet) from methionine and ATP. The overall synthetic reaction is composed of two sequential steps, AdoMet formation and the subsequent tripolyphosphate hydrolysis which occurs prior to release of AdoMet from the enzyme. The chain is S-adenosylmethionine synthase from Streptococcus equi subsp. zooepidemicus (strain MGCS10565).